Reading from the N-terminus, the 611-residue chain is Elongation factor 4 (611 aa).

A tr-type G domain is found at 12–194 (SRIRNFSIIA…QIVEKVPAPA (183 aa)). Residues 24 to 29 (DHGKST) and 141 to 144 (NKID) contribute to the GTP site.

It belongs to the TRAFAC class translation factor GTPase superfamily. Classic translation factor GTPase family. LepA subfamily.

It is found in the cell membrane. It carries out the reaction GTP + H2O = GDP + phosphate + H(+). In terms of biological role, required for accurate and efficient protein synthesis under certain stress conditions. May act as a fidelity factor of the translation reaction, by catalyzing a one-codon backward translocation of tRNAs on improperly translocated ribosomes. Back-translocation proceeds from a post-translocation (POST) complex to a pre-translocation (PRE) complex, thus giving elongation factor G a second chance to translocate the tRNAs correctly. Binds to ribosomes in a GTP-dependent manner. This Bacillus velezensis (strain DSM 23117 / BGSC 10A6 / LMG 26770 / FZB42) (Bacillus amyloliquefaciens subsp. plantarum) protein is Elongation factor 4.